A 250-amino-acid polypeptide reads, in one-letter code: Triosephosphate isomerase (250 aa).

9-11 (NWK) serves as a coordination point for substrate. Histidine 94 (electrophile) is an active-site residue. Glutamate 165 serves as the catalytic Proton acceptor. Residues glycine 171, serine 211, and 232-233 (GG) each bind substrate.

It belongs to the triosephosphate isomerase family. In terms of assembly, homodimer.

Its subcellular location is the cytoplasm. It carries out the reaction D-glyceraldehyde 3-phosphate = dihydroxyacetone phosphate. Its pathway is carbohydrate biosynthesis; gluconeogenesis. It functions in the pathway carbohydrate degradation; glycolysis; D-glyceraldehyde 3-phosphate from glycerone phosphate: step 1/1. In terms of biological role, involved in the gluconeogenesis. Catalyzes stereospecifically the conversion of dihydroxyacetone phosphate (DHAP) to D-glyceraldehyde-3-phosphate (G3P). In Alkalilimnicola ehrlichii (strain ATCC BAA-1101 / DSM 17681 / MLHE-1), this protein is Triosephosphate isomerase.